A 284-amino-acid chain; its full sequence is 2-dehydro-3-deoxyphosphooctonate aldolase (284 aa).

This sequence belongs to the KdsA family.

It is found in the cytoplasm. It catalyses the reaction D-arabinose 5-phosphate + phosphoenolpyruvate + H2O = 3-deoxy-alpha-D-manno-2-octulosonate-8-phosphate + phosphate. The protein operates within carbohydrate biosynthesis; 3-deoxy-D-manno-octulosonate biosynthesis; 3-deoxy-D-manno-octulosonate from D-ribulose 5-phosphate: step 2/3. It participates in bacterial outer membrane biogenesis; lipopolysaccharide biosynthesis. The protein is 2-dehydro-3-deoxyphosphooctonate aldolase of Cronobacter sakazakii (strain ATCC BAA-894) (Enterobacter sakazakii).